The primary structure comprises 358 residues: Protein ttm-2 (358 aa).

Belongs to the arrestin family.

Its function is as follows. Involved in resistance to B.thuringiensis pore-forming toxin Cry5B downstream of the sek-1 and pmk-1 MAPK kinase pathway. The protein is Protein ttm-2 of Caenorhabditis elegans.